Reading from the N-terminus, the 196-residue chain is Imidazoleglycerol-phosphate dehydratase (196 aa).

The protein belongs to the imidazoleglycerol-phosphate dehydratase family.

Its subcellular location is the cytoplasm. The enzyme catalyses D-erythro-1-(imidazol-4-yl)glycerol 3-phosphate = 3-(imidazol-4-yl)-2-oxopropyl phosphate + H2O. It participates in amino-acid biosynthesis; L-histidine biosynthesis; L-histidine from 5-phospho-alpha-D-ribose 1-diphosphate: step 6/9. This is Imidazoleglycerol-phosphate dehydratase from Ralstonia pickettii (strain 12J).